A 128-amino-acid chain; its full sequence is uncharacterized protein (128 aa).

Residues 8–28 traverse the membrane as a helical segment; the sequence is YQAIYLIFAGFTVFGLLLHFY.

It is found in the membrane. This is an uncharacterized protein from Haemophilus influenzae (strain ATCC 51907 / DSM 11121 / KW20 / Rd).